A 593-amino-acid polypeptide reads, in one-letter code: Cyclin-dependent kinase-like 3 (593 aa).

Positions 4-286 constitute a Protein kinase domain; sequence YETLGKVGEG…STDLLHHDYF (283 aa). Residues 10–18 and Lys-33 contribute to the ATP site; that span reads VGEGSYGTV. The [NKR]KIAxRE motif lies at 45 to 51; the sequence is KIATREI. The active-site Proton acceptor is the Asp-125. At Thr-158 the chain carries Phosphothreonine. A Phosphotyrosine modification is found at Tyr-160. Over residues 368–403 the composition is skewed to basic and acidic residues; that stretch reads GKGDVPDLKKTESEGEHRQQGTAEDTHPTSLDRKPS. The tract at residues 368–512 is disordered; it reads GKGDVPDLKK…NDQIASGNKR (145 aa). Over residues 436–452 the composition is skewed to low complexity; the sequence is NLTSSNLLAANPSSNLS. Polar residues-rich tracts occupy residues 468–491 and 499–508; these read SSQTIGQTLSNSRQEDTGPTQVQT and RTGQNDQIAS.

The protein belongs to the protein kinase superfamily. CMGC Ser/Thr protein kinase family. CDC2/CDKX subfamily. As to expression, highly expressed in brain, and to a lower extent in heart and testis.

Its subcellular location is the nucleus. It localises to the cytoplasm. The enzyme catalyses L-seryl-[protein] + ATP = O-phospho-L-seryl-[protein] + ADP + H(+). The catalysed reaction is L-threonyl-[protein] + ATP = O-phospho-L-threonyl-[protein] + ADP + H(+). The protein is Cyclin-dependent kinase-like 3 of Rattus norvegicus (Rat).